The sequence spans 1765 residues: Sodium channel protein type 11 subunit alpha (1765 aa).

Topologically, residues 1–126 are cytoplasmic; it reads MEERYYPVIF…PIRSFMIRIS (126 aa). One copy of the I repeat lies at 115 to 406; that stretch reads FNPIRSFMIR…VTMAYEEQNR (292 aa). The helical transmembrane segment at 127–148 threads the bilayer; it reads VHSVFSMFIICTVIINCMFMAN. N149 carries N-linked (GlcNAc...) asparagine glycosylation. The Extracellular portion of the chain corresponds to 149 to 159; that stretch reads NSSVDSRPSSN. Residues 160 to 179 traverse the membrane as a helical segment; it reads IPEYVFIGIYVLEAVIKILA. Over 180-191 the chain is Cytoplasmic; it reads RGFIVDEFSYLR. A helical membrane pass occupies residues 192-211; that stretch reads DPWNWLDFIVIGTAIAPCFL. The Extracellular portion of the chain corresponds to 212 to 219; that stretch reads GNKVNNLS. A glycan (N-linked (GlcNAc...) asparagine) is linked at N217. Residues 220–239 form a helical; Voltage-sensor membrane-spanning segment; sequence TLRTFRVLRALKAISVISGL. The Cytoplasmic segment spans residues 240–255; the sequence is KVIVGALLRSVKKLVD. The helical transmembrane segment at 256-269 threads the bilayer; sequence VMVLTLFCLSIFAL. Topologically, residues 270 to 342 are extracellular; the sequence is VGQQLFMGIL…PDYNYTNFDS (73 aa). An intrachain disulfide couples C283 to C320. Residues N303, N327, and N336 are each glycosylated (N-linked (GlcNAc...) asparagine). Positions 343–367 form an intramembrane region, pore-forming; sequence FGWSFLAMFRVMTQDSWEKLYRQIL. The Extracellular segment spans residues 368 to 374; it reads RTSGIYF. The helical transmembrane segment at 375–400 threads the bilayer; sequence VFFFVVVIFLGSFYLLNLTLAVVTMA. Topologically, residues 401-570 are cytoplasmic; that stretch reads YEEQNRNVAA…WLCIKKVLQT (170 aa). The interval 470–490 is disordered; sequence RGSKTARASASDSEDDASKNP. Residues 557–821 form an II repeat; the sequence is CSPPWLCIKK…EGETRKTKVQ (265 aa). A helical membrane pass occupies residues 571–594; it reads IMTDPFTELAITICIIVNTVFLAM. Over 595-605 the chain is Extracellular; sequence EHHNMDNSLKD. The chain crosses the membrane as a helical span at residues 606–629; the sequence is ILKIGNWVFTGIFIAEMCLKIIAL. The Cytoplasmic portion of the chain corresponds to 630-637; it reads DPYHYFRH. A helical transmembrane segment spans residues 638 to 659; that stretch reads GWNIFDSIVALVSLADVLFHKL. Residues 660 to 664 lie on the Extracellular side of the membrane; it reads SKNLS. N-linked (GlcNAc...) asparagine glycosylation occurs at N662. A helical; Voltage-sensor transmembrane segment spans residues 665-684; the sequence is FLASLRVLRVFKLAKSWPTL. Topologically, residues 685 to 699 are cytoplasmic; the sequence is NTLIKIIGHSVGALG. The chain crosses the membrane as a helical span at residues 700-722; that stretch reads NLTVVLTIVVFIFSVVGMRLFGA. Residues 723-742 lie on the Extracellular side of the membrane; it reads KFNKTCSTSPESLRRWHMGD. The N-linked (GlcNAc...) asparagine glycan is linked to N725. Positions 743–763 form an intramembrane region, pore-forming; that stretch reads FYHSFLVVFRILCGEWIENMW. At 764 to 773 the chain is on the extracellular side; sequence ECMQEMEGSP. Cysteines 765 and 775 form a disulfide. A helical membrane pass occupies residues 774-799; sequence LCVIVFVLIMVVGKLVVLNLFIALLL. Over 800–1030 the chain is Cytoplasmic; that stretch reads NSFSNEEKDG…WWNLRKTCYQ (231 aa). The interval 850–869 is disordered; that stretch reads NSPKPNEATESFAGESRDTA. One copy of the III repeat lies at 1023 to 1320; the sequence is NLRKTCYQIV…KKYYNAMKKL (298 aa). The helical transmembrane segment at 1031 to 1053 threads the bilayer; that stretch reads IVKHSWFESFIIFVILLSSGALI. Over 1054 to 1067 the chain is Extracellular; sequence FEDVNLPSRPQVEK. Residues 1068 to 1093 traverse the membrane as a helical segment; sequence LLKCTDNIFTFIFLLEMILKWVAFGF. The Cytoplasmic segment spans residues 1094–1099; sequence RKYFTS. A helical membrane pass occupies residues 1100–1117; the sequence is AWCWLDFLIVVVSGLSLT. N1118 is a topological domain (extracellular). Residues 1119–1140 traverse the membrane as a helical; Voltage-sensor segment; sequence LPNLKSFRNLRALRPLRALSQF. The Cytoplasmic portion of the chain corresponds to 1141-1159; the sequence is EGMKVVVNALMSAIPAILN. Residues 1160–1181 traverse the membrane as a helical segment; sequence VLLVCLIFWLIFCILGVNFFSG. Residues 1182-1224 lie on the Extracellular side of the membrane; sequence KFGRCINGTDINKYFNASNVPNQSQCLVSNYTWKVPNVNFDNV. N-linked (GlcNAc...) asparagine glycans are attached at residues N1188, N1197, N1203, and N1211. An intramembrane region (pore-forming) is located at residues 1225 to 1246; that stretch reads GNAYLALLQVATYKGWLDIMNA. At 1247 to 1262 the chain is on the extracellular side; that stretch reads AVDSRGKDEQPAFEAN. A helical membrane pass occupies residues 1263-1289; that stretch reads LYAYLYFVVFIIFGSFFTLNLFIGVII. Residues 1290–1342 lie on the Cytoplasmic side of the membrane; sequence DNFNQQQKKLGGQDIFMTEEQKKYYNAMKKLGTKKPQKPIPRPLNKCQAFVFD. The stretch at 1329-1619 is one IV repeat; the sequence is IPRPLNKCQA…WEKFDPEATQ (291 aa). A helical membrane pass occupies residues 1343–1366; sequence LVTSQVFDVIILGLIVTNMIIMMA. Over 1367–1377 the chain is Extracellular; the sequence is ESEGQPNEVKK. Residues 1378-1401 form a helical membrane-spanning segment; that stretch reads IFDILNIVFVVIFTVECLIKVFAL. Residues 1402–1407 are Cytoplasmic-facing; sequence RQHYFT. Residues 1408–1431 traverse the membrane as a helical segment; sequence NGWNLFDCVVVVLSIISTLVSGLE. Over 1432–1440 the chain is Extracellular; the sequence is NSNVFPPTL. The helical; Voltage-sensor transmembrane segment at 1441–1463 threads the bilayer; the sequence is FRIVRLARIGRILRLVRAARGIR. The Cytoplasmic segment spans residues 1464-1478; sequence TLLFALMMSLPSLFN. A helical membrane pass occupies residues 1479-1501; sequence IGLLLFLVMFIYAIFGMNWFSKV. Over 1502-1515 the chain is Extracellular; that stretch reads KRGSGIDDIFNFDT. An intramembrane region (pore-forming) is located at residues 1516–1538; that stretch reads FSGSMLCLFQITTSAGWDALLNP. Over 1539-1559 the chain is Extracellular; that stretch reads MLESKASCNSSSQESCQQPQI. A helical transmembrane segment spans residues 1560 to 1584; sequence AIVYFVSYIIISFLIVVNMYIAVIL. Over 1585-1765 the chain is Cytoplasmic; that stretch reads ENFNTATEES…DVPKIKVHCD (181 aa).

Belongs to the sodium channel (TC 1.A.1.10) family. Nav1.9/SCN11A subfamily. The voltage-resistant sodium channel consists of an ion conducting pore forming alpha-subunit regulated by one or more auxiliary subunits SCN1B, SCN2B and SCN3B. As to expression, expressed in the dorsal root ganglia (C-fiber neurons), spinal cord, trigeminal ganglia, testis, ovary, uterus and small intestine.

It is found in the cell membrane. It carries out the reaction Na(+)(in) = Na(+)(out). Its function is as follows. Sodium channel mediating the voltage-dependent sodium ion permeability of excitable membranes. Assuming opened or closed conformations in response to the voltage difference across the membrane, the protein forms a sodium-selective channel through which sodium ions may pass in accordance with their electrochemical gradient. Involved in membrane depolarization during action potential in nociceptors which function as key relay stations for the electrical transmission of pain signals from the periphery to the central nervous system. Also involved in rapid BDNF-evoked neuronal depolarization. The protein is Sodium channel protein type 11 subunit alpha of Mus musculus (Mouse).